The primary structure comprises 5218 residues: HC-toxin synthetase (5218 aa).

The tract at residues Ser-223 to Leu-620 is adenylation 1. The Carrier 1 domain maps to Met-769 to Gln-843. Ser-803 bears the O-(pantetheine 4'-phosphoryl)serine mark. Residues Ile-858 to Tyr-1154 form a condensation 1 region. The segment at Glu-1338–Ala-1806 is epimerization. The interval Ser-1828–Met-2233 is adenylation 2. The 75-residue stretch at Glu-2379–Gln-2453 folds into the Carrier 2 domain. O-(pantetheine 4'-phosphoryl)serine is present on Ser-2414. The interval Glu-2531–Thr-2929 is condensation 2. Positions Leu-2979–Arg-3386 are adenylation 3. A Carrier 3 domain is found at Gln-3532–Gln-3608. Ser-3569 bears the O-(pantetheine 4'-phosphoryl)serine mark. The interval Glu-3649 to Glu-4102 is condensation 3. The segment at Arg-4134 to Ser-4530 is adenylation 4. The Carrier 4 domain occupies Thr-4666–Asn-4740. Ser-4701 is modified (O-(pantetheine 4'-phosphoryl)serine). Positions Thr-4785–Ala-5101 are condensation 4.

Belongs to the NRP synthetase family. Pantetheine 4'-phosphate is required as a cofactor.

Its pathway is mycotoxin biosynthesis; HC-toxin biosynthesis. In terms of biological role, non-ribosomal peptide synthetase, part of the diffuse TOX2 gene cluster that mediates the biosynthesis of the HC-toxin, cyclic tetrapeptide of structure cyclo(D-Pro-L-Ala-D-Ala-L-Aeo), where Aeo stands for 2-amino-9,10-epoxi-8-oxodecanoic acid. HC-toxin is a determinant of specificity and virulence in the interaction between the producing fungus and its host, maize. HTS1, contains four modules, one for each amino acid in HC-toxin, with the order of activation being most likely Pro, Ala, Ala, and Aeo. In addition, HTS1 has one epimerase domain between modules 1 and 2, which is responsible for epimerizing L-Pro to D-Pro. The absence of an epimerizing domain after module 3, for producing D-Ala, can be explained by the presence in the cluster of TOXG, an Ala racemase, which produces D-Ala for incorporation by HTS1 into HC-toxin. The protein is HC-toxin synthetase of Cochliobolus carbonum (Maize leaf spot fungus).